Here is a 460-residue protein sequence, read N- to C-terminus: tRNA modification GTPase MnmE (460 aa).

Residues Arg22, Glu87, and Arg126 each coordinate (6S)-5-formyl-5,6,7,8-tetrahydrofolate. The TrmE-type G domain occupies 222–381 (GLKTAIIGKP…LENTIYNLVF (160 aa)). K(+) is bound at residue Asn232. Residues 232–237 (NVGKSS), 251–257 (TDIPGTT), and 276–279 (DTAG) each bind GTP. Ser236 contributes to the Mg(2+) binding site. 3 residues coordinate K(+): Thr251, Ile253, and Thr256. Thr257 provides a ligand contact to Mg(2+). Lys460 serves as a coordination point for (6S)-5-formyl-5,6,7,8-tetrahydrofolate.

This sequence belongs to the TRAFAC class TrmE-Era-EngA-EngB-Septin-like GTPase superfamily. TrmE GTPase family. In terms of assembly, homodimer. Heterotetramer of two MnmE and two MnmG subunits. The cofactor is K(+).

It localises to the cytoplasm. Its function is as follows. Exhibits a very high intrinsic GTPase hydrolysis rate. Involved in the addition of a carboxymethylaminomethyl (cmnm) group at the wobble position (U34) of certain tRNAs, forming tRNA-cmnm(5)s(2)U34. The protein is tRNA modification GTPase MnmE of Thermoanaerobacter pseudethanolicus (strain ATCC 33223 / 39E) (Clostridium thermohydrosulfuricum).